Consider the following 481-residue polypeptide: MPSNPNRSIYDFYNITDIIGEGTFSTVTLANHIEKIEDKYAIKIISKEVLDNERRTYVDWEISILSKCQHPNIIKFYEHYESDEDICLVLEWIPNGDLFDRIVKKGVFNEEEARLTMKSLLSAVEYLHDKSVVHRDIKPENILFSDSYGGIKLGDFGLAKFYEESIGLELACGTLAYSAPEITNNQVYRKSVDMWSCGCILYFILFGRPPFYSDDESEMFELITKGQWEFPSKTQHKYSDQVKDLIKLLLENDPNKRLTVKQSLAHKWIQSIDERSFSSVIKQSPLITSQQQQQQSPSSLLSSSSSSTASSPSLKPLSPLVAIIEQQEYNYNHQQLQNHNILHSSNSHSRHHHASSANSTTVDQQQEEDNNHHYHRHNSNNNINNNNDNNDNNNSNSNNSNNNINNFINNNNNNNNNNSNFFDDDDEIDINQNEMDDIDDEQQQPTNSLRSSSKPIAIKKSQIRTSLNGNIDIKRGVLTPL.

The Protein kinase domain occupies 13–269; it reads YNITDIIGEG…VKQSLAHKWI (257 aa). Residues 19–27 and K43 each bind ATP; that span reads IGEGTFSTV. Residue D136 is the Proton acceptor of the active site. 2 disordered regions span residues 285–315 and 345–427; these read PLITSQQQQQQSPSSLLSSSSSSTASSPSLK and SNSH…DDDE. Over residues 379–421 the composition is skewed to low complexity; that stretch reads SNNNINNNNDNNDNNNSNSNNSNNNINNFINNNNNNNNNNSNF.

The protein belongs to the protein kinase superfamily. CAMK Ser/Thr protein kinase family. CaMK subfamily.

The catalysed reaction is L-seryl-[myosin light chain] + ATP = O-phospho-L-seryl-[myosin light chain] + ADP + H(+). The enzyme catalyses L-threonyl-[myosin light chain] + ATP = O-phospho-L-threonyl-[myosin light chain] + ADP + H(+). Does not have a calmodulin-binding domain. Its function is as follows. May phosphorylate a specific serine in the N-terminus of a myosin light chain. The polypeptide is Probable myosin light chain kinase DDB_G0284661 (Dictyostelium discoideum (Social amoeba)).